We begin with the raw amino-acid sequence, 111 residues long: Putative G antigen family E member 3 (111 aa).

A disordered region spans residues 1–67; it reads MSEHVRTRSQ…EGAPAVQGPD (67 aa). A compositionally biased stretch (polar residues) spans 8–24; the sequence is RSQSSERGNDQESSQPV. T97 is modified (phosphothreonine).

It belongs to the GAGE family.

The sequence is that of Putative G antigen family E member 3 (PAGE2B) from Homo sapiens (Human).